The following is a 161-amino-acid chain: MKAVSPVRPSGRKAPSGCGGGELALRCLAEHGHSLGGSAAAAAAAAAARCKAAEAAADEPALCLQCDMNDCYSRLRRLVPTIPPNKKVSKVEILQHVIDYILDLQLALETHPALLRQPPPPAPPLHPAGACPVAPPRTPLTALNTDPAGAVNKQGDSILCR.

Positions 52-104 (AAEAAADEPALCLQCDMNDCYSRLRRLVPTIPPNKKVSKVEILQHVIDYILDL) constitute a bHLH domain.

In terms of assembly, heterodimer with other HLH proteins.

It is found in the nucleus. Functionally, transcriptional regulator (lacking a basic DNA binding domain) which negatively regulates the basic helix-loop-helix (bHLH) transcription factors by forming heterodimers and inhibiting their DNA binding and transcriptional activity. Implicated in regulating a variety of cellular processes, including cellular growth, senescence, differentiation, apoptosis, angiogenesis, and neoplastic transformation. The protein is DNA-binding protein inhibitor ID-4 (Id4) of Mus musculus (Mouse).